The chain runs to 205 residues: Ribosome maturation factor RimP (205 aa).

The protein belongs to the RimP family.

It is found in the cytoplasm. Required for maturation of 30S ribosomal subunits. The sequence is that of Ribosome maturation factor RimP from Sinorhizobium fredii (strain NBRC 101917 / NGR234).